The primary structure comprises 858 residues: Ubiquitin carboxyl-terminal hydrolase 5 (858 aa).

Ala-2 carries the post-translational modification N-acetylalanine. The segment at 74 to 96 (RRTRRPKEEDPTTGTGDPPRKKP) is disordered. Lys-113 participates in a covalent cross-link: Glycyl lysine isopeptide (Lys-Gly) (interchain with G-Cter in SUMO). Ser-149 and Ser-156 each carry phosphoserine. Residues 175–283 (QVSKHAFSLK…EHLSHFGIDM (109 aa)) form a UBP-type; degenerate zinc finger. Cys-195 and Cys-816 are disulfide-bonded. Zn(2+)-binding residues include Cys-199 and Cys-202. Trp-209 lines the substrate pocket. Cys-219 contributes to the Zn(2+) binding site. 221–224 (RRYF) contributes to the substrate binding site. His-232 lines the Zn(2+) pocket. Substrate-binding residues include Tyr-259, Tyr-261, and Asp-264. Position 292 is a phosphothreonine (Thr-292). One can recognise a USP domain in the interval 326–856 (TGIRNLGNSC…LGYIYFYQRV (531 aa)). Residue Cys-335 is the Nucleophile of the active site. Thr-623 carries the post-translational modification Phosphothreonine. UBA domains follow at residues 654–695 (MLDE…VMSH) and 722–762 (PPPE…IFSH). Phosphoserine occurs at positions 779, 783, and 785. Residue His-818 is the Proton acceptor of the active site.

The protein belongs to the peptidase C19 family. As to quaternary structure, homodimer. Interacts with TRIML1. Ubiquitinated by SMURF1; leading to proteasomal degradation. Post-translationally, SUMOylated at Lys-113; SUMOylation affects the interaction with Cav3.2 channels.

Its subcellular location is the cytoplasm. It localises to the stress granule. The protein localises to the nucleus. The catalysed reaction is Thiol-dependent hydrolysis of ester, thioester, amide, peptide and isopeptide bonds formed by the C-terminal Gly of ubiquitin (a 76-residue protein attached to proteins as an intracellular targeting signal).. Its function is as follows. Deubiquitinating enzyme that participates in a wide range of cellular processes by specifically cleaving isopeptide bonds between ubiquitin and substrate proteins or ubiquitin itself. Affects thereby important cellular signaling pathways such as NF-kappa-B, Wnt/beta-catenin, and cytokine production by regulating ubiquitin-dependent protein degradation. Participates in the activation of the Wnt signaling pathway by promoting FOXM1 deubiquitination and stabilization that induces the recruitment of beta-catenin to Wnt target gene promoter. Regulates the assembly and disassembly of heat-induced stress granules by mediating the hydrolysis of unanchored ubiquitin chains. Promotes lipopolysaccharide-induced apoptosis and inflammatory response by stabilizing the TXNIP protein. Affects T-cell biology by stabilizing the inhibitory receptor on T-cells PDC1. Acts as a negative regulator of autophagy by regulating ULK1 at both protein and mRNA levels. Acts also as a negative regulator of type I interferon production by simultaneously removing both 'Lys-48'-linked unanchored and 'Lys-63'-linked anchored polyubiquitin chains on the transcription factor IRF3. Modulates the stability of DNA mismatch repair protein MLH1 and counteracts the effect of the ubiquitin ligase UBR4. Upon activation by insulin, it gets phosphorylated through mTORC1-mediated phosphorylation to enhance YTHDF1 stability by removing 'Lys-11'-linked polyubiquitination. May also deubiquitinate other substrates such as the calcium channel CACNA1H. In Pongo abelii (Sumatran orangutan), this protein is Ubiquitin carboxyl-terminal hydrolase 5 (UBP5).